A 464-amino-acid polypeptide reads, in one-letter code: Probable glycine dehydrogenase (decarboxylating) subunit 1 (464 aa).

Belongs to the GcvP family. N-terminal subunit subfamily. As to quaternary structure, the glycine cleavage system is composed of four proteins: P, T, L and H. In this organism, the P 'protein' is a heterodimer of two subunits.

The enzyme catalyses N(6)-[(R)-lipoyl]-L-lysyl-[glycine-cleavage complex H protein] + glycine + H(+) = N(6)-[(R)-S(8)-aminomethyldihydrolipoyl]-L-lysyl-[glycine-cleavage complex H protein] + CO2. Its function is as follows. The glycine cleavage system catalyzes the degradation of glycine. The P protein binds the alpha-amino group of glycine through its pyridoxal phosphate cofactor; CO(2) is released and the remaining methylamine moiety is then transferred to the lipoamide cofactor of the H protein. The polypeptide is Probable glycine dehydrogenase (decarboxylating) subunit 1 (Thiobacillus denitrificans (strain ATCC 25259 / T1)).